A 62-amino-acid chain; its full sequence is Large ribosomal subunit protein eL24 (62 aa).

Cys7, Cys10, Cys33, and Cys37 together coordinate Zn(2+). The C4-type zinc finger occupies Cys7–Cys37.

It belongs to the eukaryotic ribosomal protein eL24 family. As to quaternary structure, part of the 50S ribosomal subunit. Forms a cluster with proteins L3 and L14. It depends on Zn(2+) as a cofactor.

Functionally, binds to the 23S rRNA. In Sulfolobus acidocaldarius (strain ATCC 33909 / DSM 639 / JCM 8929 / NBRC 15157 / NCIMB 11770), this protein is Large ribosomal subunit protein eL24.